We begin with the raw amino-acid sequence, 269 residues long: Growth-regulating factor 11 (269 aa).

Basic and acidic residues predominate over residues 1–11 (MAAEGEAKKDS). A disordered region spans residues 1–71 (MAAEGEAKKD…GKEDVEEGGV (71 aa)). Gly residues predominate over residues 43–52 (GEAGGGGGGG). A compositionally biased stretch (acidic residues) spans 58–68 (EEEEGKEDVEE). The QLQ domain occupies 114–149 (AFTAMQLQELEQQSRVYQYMAARVPVPTHLVFPIWK). In terms of domain architecture, WRC spans 180-224 (EPEPGRCRRTDGKKWRCWRNAIANEKYCERHMHRGRKRPVQLVVE). 2 consecutive short sequence motifs (bipartite nuclear localization signal) follow at residues 185–195 (RCRRTDGKKWR) and 213–217 (RGRKR). Residues 212 to 269 (HRGRKRPVQLVVEDDEPDSTSGSKPASGKATEGGKKTDDKSSSSKKLAVAAPAAVEST) are disordered. Residues 243-253 (EGGKKTDDKSS) are compositionally biased toward basic and acidic residues. Positions 255–269 (SKKLAVAAPAAVEST) are enriched in low complexity.

It belongs to the GRF family.

Its subcellular location is the nucleus. In terms of biological role, transcription activator that plays a regulatory role in gibberellin-induced stem elongation. This Oryza sativa subsp. japonica (Rice) protein is Growth-regulating factor 11 (GRF11).